The chain runs to 306 residues: Replication termination factor 2 (306 aa).

Residues A193–E276 are disordered. The segment covering G226 to T240 has biased composition (basic and acidic residues). The span at A243–G255 shows a compositional bias: polar residues. At S287 the chain carries Phosphoserine.

Belongs to the rtf2 family. Interacts with DDI2; probably also interacts with DDI1. In terms of processing, undergoes proteasomal degradation, via DDI1 and DDI2. Removal from stalled replisomes and degradation are required for genome stability.

Its subcellular location is the chromosome. Its function is as follows. Replication termination factor which is a component of the elongating replisome. Required for ATR pathway signaling upon DNA damage and has a positive activity during DNA replication. Might function to facilitate fork pausing at replication fork barriers like the rDNA. May be globally required to stimulate ATR signaling after the fork stalls or encounters a lesion. Interacts with nascent DNA. This Homo sapiens (Human) protein is Replication termination factor 2.